We begin with the raw amino-acid sequence, 955 residues long: UPF0182 protein tll1193 (955 aa).

Helical transmembrane passes span 6-26, 53-73, 98-118, 163-183, 186-206, 240-260, 280-300, 324-344, and 354-374; these read VVPL…AIAL, WSVQ…FYGC, GLGL…LIVA, WLLG…VGLF, LGIL…PVVL, LWLV…YLLA, LQGL…LERY, LYGW…WSAI, and GPIA…ILIV.

It belongs to the UPF0182 family.

The protein resides in the cell membrane. The chain is UPF0182 protein tll1193 from Thermosynechococcus vestitus (strain NIES-2133 / IAM M-273 / BP-1).